The primary structure comprises 137 residues: Large ribosomal subunit protein uL16 (137 aa).

This sequence belongs to the universal ribosomal protein uL16 family. As to quaternary structure, part of the 50S ribosomal subunit.

Its function is as follows. Binds 23S rRNA and is also seen to make contacts with the A and possibly P site tRNAs. The protein is Large ribosomal subunit protein uL16 of Streptococcus sanguinis (strain SK36).